Here is a 644-residue protein sequence, read N- to C-terminus: MPEPHAVLYVTNELSHIVKNGFLPIWKLTGDESLNDLWLENGKYATDVYAYGDVSKWTIRQLRGHGFIFISTHKNVQLADIIKTVDVRIPREVARSHDMKAFENEIGRRRIRMRKGFGDALRNYAFKMAIEFHGSEAETLNDANPRLHKIYGMPEMPPLYMEYAEIGTRFDDEPTDEKLVSMLDYIVYSAEEVHYVGCGDLRTLMQFKKRSPGRFRRVLWHVYDPIAPECSDPNVIVHNIMVDSKKNILKHMNFLKRVERLFIWDVSSDRSQMNDHEWETTRFAEDRLGEEIAYEMGGAFSSALIKHRIPNSKDEYHCISTYLFPQPGADADMYELRNFMRLRGYSHVDRHMHPDASVTKVVSRDVRKMVELYHGRDRGRFLKKRLFEHLHIVRKNGLLHESDEPRADLFYLTNRCNMGLEPSIYEVMKKSVIATAWVGRAPLYDYDDFALPRSTVMLNGSYRDIRILDGNGAILFLMWRYPDIVKKDLTYDPAWAMNFAVSLKEPIPDPPVPDISLCRFIGLRVESSVLRVRNPTLHETADELKRMGLDLSGHLYVTLMSGAYVTDLFWWFKMILDWSAQNKEQKLRDLKRSAAEVIEWKEQMAERPWHVRNDLIRALREYKRKMGMREGASIDSWLELLRHL.

This sequence belongs to the orbivirus VP4 family.

The protein resides in the virion. Its function is as follows. The VP4 protein is one of the five proteins (with VP1, VP3, VP6 and VP7) which form the inner capsid of the virus. In Bluetongue virus 11 (isolate USA) (BTV 11), this protein is Core protein VP4 (Segment-4).